The primary structure comprises 335 residues: MQLEIINPESTLVNDVVAHRVAFSIGSNFNIYWYGIIFVCGFLIAILTYSLRLKFHYKVPYDPGFYYIFLAIPMTIIGARLWSLAIGDAKDFFDFRSGGLAIQGGVIAGVLSAAVYFPLILRMPKYHIRDIDADGNVVIRQPSMWIYADAIIPTILIGQALGRWGNFINGEIFGAESTVNDLQWLKKAMPAVFEGMKHYFIEGNKTLFTIYQPLFLYESFFNVIVFVFIYFGLSYIKQLKIGFISMSYFFFYGVTRFSTESARAPQFSFEGTYIINSLLLIFGVLGALYVQFIAPLLRKKFLLDAIIEMFYKKKDQIHKFGELRKPEEFLFYCHK.

3 consecutive transmembrane segments (helical) span residues 31 to 51 (IYWYGIIFVCGFLIAILTYSL), 67 to 87 (YIFLAIPMTIIGARLWSLAIG), and 100 to 120 (LAIQGGVIAGVLSAAVYFPLI). R163 serves as a coordination point for a 1,2-diacyl-sn-glycero-3-phospho-(1'-sn-glycerol). The next 3 membrane-spanning stretches (helical) occupy residues 213-233 (PLFLYESFFNVIVFVFIYFGL), 235-255 (YIKQLKIGFISMSYFFFYGVT), and 277-297 (SLLLIFGVLGALYVQFIAPLL).

It belongs to the Lgt family.

It is found in the cell membrane. It carries out the reaction L-cysteinyl-[prolipoprotein] + a 1,2-diacyl-sn-glycero-3-phospho-(1'-sn-glycerol) = an S-1,2-diacyl-sn-glyceryl-L-cysteinyl-[prolipoprotein] + sn-glycerol 1-phosphate + H(+). It participates in protein modification; lipoprotein biosynthesis (diacylglyceryl transfer). Its function is as follows. Catalyzes the transfer of the diacylglyceryl group from phosphatidylglycerol to the sulfhydryl group of the N-terminal cysteine of a prolipoprotein, the first step in the formation of mature lipoproteins. This Ureaplasma parvum serovar 3 (strain ATCC 27815 / 27 / NCTC 11736) protein is Phosphatidylglycerol--prolipoprotein diacylglyceryl transferase.